The sequence spans 387 residues: Flap endonuclease 1 (387 aa).

An N-domain region spans residues 1–104 (MGILGLSKLI…GELAKRAERR (104 aa)). A Mg(2+)-binding site is contributed by aspartate 34. 2 residues coordinate DNA: arginine 47 and arginine 70. Mg(2+) is bound by residues aspartate 86, glutamate 158, glutamate 160, aspartate 179, and aspartate 181. Residues 122–253 (GIEKFNRRLV…KRAIELINNY (132 aa)) form an I-domain region. Residue glutamate 158 participates in DNA binding. Glycine 231 and aspartate 233 together coordinate DNA. Position 233 (aspartate 233) interacts with Mg(2+). The interaction with PCNA stretch occupies residues 336 to 344 (TQVRLDSFF). The disordered stretch occupies residues 346 to 387 (TLPSTPNATNAAKRKAEEAKKSANNKKAKTSGGVGGRGRRPK).

The protein belongs to the XPG/RAD2 endonuclease family. FEN1 subfamily. Interacts with PCNA. Three molecules of FEN1 bind to one PCNA trimer with each molecule binding to one PCNA monomer. PCNA stimulates the nuclease activity without altering cleavage specificity. It depends on Mg(2+) as a cofactor. Phosphorylated. Phosphorylation upon DNA damage induces relocalization to the nuclear plasma.

It is found in the nucleus. Its subcellular location is the nucleolus. It localises to the nucleoplasm. The protein localises to the mitochondrion. In terms of biological role, structure-specific nuclease with 5'-flap endonuclease and 5'-3' exonuclease activities involved in DNA replication and repair. During DNA replication, cleaves the 5'-overhanging flap structure that is generated by displacement synthesis when DNA polymerase encounters the 5'-end of a downstream Okazaki fragment. It enters the flap from the 5'-end and then tracks to cleave the flap base, leaving a nick for ligation. Also involved in the long patch base excision repair (LP-BER) pathway, by cleaving within the apurinic/apyrimidinic (AP) site-terminated flap. Acts as a genome stabilization factor that prevents flaps from equilibrating into structures that lead to duplications and deletions. Also possesses 5'-3' exonuclease activity on nicked or gapped double-stranded DNA, and exhibits RNase H activity. Also involved in replication and repair of rDNA and in repairing mitochondrial DNA. The sequence is that of Flap endonuclease 1 from Drosophila erecta (Fruit fly).